The sequence spans 546 residues: DDB1- and CUL4-associated factor 11 (546 aa).

The segment covering 1–19 (MGSRNSSSAGSGSGDPSEG) has biased composition (low complexity). Positions 1 to 40 (MGSRNSSSAGSGSGDPSEGLPRRGAGLRRSEEEEEEDEDV) are disordered. Residues Leu49 and Ser75 each carry the phosphoserine modification. WD repeat units lie at residues 170 to 210 (SYSQ…RKFK), 216 to 258 (DVGW…TALD), 263 to 302 (ERRF…RTLQ), 305 to 345 (SHED…EDDP), 353 to 392 (GHQD…SREG), 435 to 480 (GVLH…KKLT), and 481 to 520 (NHKA…YFQD). The tract at residues 523-546 (PESEECASAPAPVPQSSTPFSSPQ) is disordered. A compositionally biased stretch (polar residues) spans 536 to 546 (PQSSTPFSSPQ).

In terms of assembly, interacts with DDB1 and CUL4A.

It participates in protein modification; protein ubiquitination. Its function is as follows. May function as a substrate receptor for CUL4-DDB1 E3 ubiquitin-protein ligase complex. The protein is DDB1- and CUL4-associated factor 11 (DCAF11) of Homo sapiens (Human).